The chain runs to 300 residues: Ribosomal protein L11 methyltransferase (300 aa).

S-adenosyl-L-methionine-binding residues include Thr152, Gly173, Asp195, and Asn234.

It belongs to the methyltransferase superfamily. PrmA family.

It localises to the cytoplasm. It catalyses the reaction L-lysyl-[protein] + 3 S-adenosyl-L-methionine = N(6),N(6),N(6)-trimethyl-L-lysyl-[protein] + 3 S-adenosyl-L-homocysteine + 3 H(+). In terms of biological role, methylates ribosomal protein L11. This is Ribosomal protein L11 methyltransferase from Paraburkholderia phymatum (strain DSM 17167 / CIP 108236 / LMG 21445 / STM815) (Burkholderia phymatum).